Reading from the N-terminus, the 490-residue chain is Trigger factor (490 aa).

The region spanning 161-247 (GDQVIVDIEA…VHEVKEAELP (87 aa)) is the PPIase FKBP-type domain. Positions 441–460 (AEPAEGTEPAAEEAVTAPEV) are enriched in low complexity. The disordered stretch occupies residues 441–490 (AEPAEGTEPAAEEAVTAPEVVDGETTPASESAESLAVTETGSRADDDQAS). A compositionally biased stretch (polar residues) spans 466–481 (TPASESAESLAVTETG).

It belongs to the FKBP-type PPIase family. Tig subfamily.

It localises to the cytoplasm. It carries out the reaction [protein]-peptidylproline (omega=180) = [protein]-peptidylproline (omega=0). Involved in protein export. Acts as a chaperone by maintaining the newly synthesized protein in an open conformation. Functions as a peptidyl-prolyl cis-trans isomerase. The chain is Trigger factor from Thermomicrobium roseum (strain ATCC 27502 / DSM 5159 / P-2).